We begin with the raw amino-acid sequence, 89 residues long: Large ribosomal subunit protein bL27 (89 aa).

The interval Met-1–Gly-22 is disordered.

It belongs to the bacterial ribosomal protein bL27 family.

This chain is Large ribosomal subunit protein bL27, found in Dinoroseobacter shibae (strain DSM 16493 / NCIMB 14021 / DFL 12).